Reading from the N-terminus, the 314-residue chain is Carbamate kinase (314 aa).

This sequence belongs to the carbamate kinase family.

Its subcellular location is the cytoplasm. It carries out the reaction hydrogencarbonate + NH4(+) + ATP = carbamoyl phosphate + ADP + H2O + H(+). The protein operates within metabolic intermediate metabolism; carbamoyl phosphate degradation; CO(2) and NH(3) from carbamoyl phosphate: step 1/1. The polypeptide is Carbamate kinase (arcC) (Latilactobacillus sakei (Lactobacillus sakei)).